The sequence spans 231 residues: Succinate dehydrogenase subunit 5, mitochondrial (231 aa).

Residues 1–63 constitute a mitochondrion transit peptide; that stretch reads MAAALRSSCA…AFSWNLRRLF (63 aa).

As to quaternary structure, component of complex II composed of eight subunits in plants: four classical SDH subunits SDH1, SDH2, SDH3 and SDH4 (a flavoprotein (FP), an iron-sulfur protein (IP), and a cytochrome b composed of a large and a small subunit.), as well as four subunits unknown in mitochondria from bacteria and heterotrophic eukaryotes.

It localises to the mitochondrion inner membrane. It functions in the pathway carbohydrate metabolism; tricarboxylic acid cycle. This is Succinate dehydrogenase subunit 5, mitochondrial from Oryza sativa subsp. japonica (Rice).